The following is a 398-amino-acid chain: Probable aminomethyltransferase (398 aa).

It belongs to the GcvT family. As to quaternary structure, the glycine cleavage system is composed of four proteins: P, T, L and H.

It carries out the reaction N(6)-[(R)-S(8)-aminomethyldihydrolipoyl]-L-lysyl-[protein] + (6S)-5,6,7,8-tetrahydrofolate = N(6)-[(R)-dihydrolipoyl]-L-lysyl-[protein] + (6R)-5,10-methylene-5,6,7,8-tetrahydrofolate + NH4(+). The glycine cleavage system catalyzes the degradation of glycine. The chain is Probable aminomethyltransferase from Thermococcus kodakarensis (strain ATCC BAA-918 / JCM 12380 / KOD1) (Pyrococcus kodakaraensis (strain KOD1)).